The sequence spans 183 residues: MSQTVGATRLAYSRVWHHISAVTPHPTLSTIKAPSEAITPPSLGRLASRIATILMGKHKPIWDPSTDCGDYVVVTNCAGLYTTGHKKWRKTYYRHNTRPGSLQAITMDALMEKHGGAEVLRKAVSGMLPKNRLRDKRLARLKAFEGDAHPYKENLVRFGGKVVGAPGWEEAVKAIREADMERL.

Belongs to the universal ribosomal protein uL13 family. Component of the mitochondrial large ribosomal subunit (mt-LSU). Mature N.crassa 74S mitochondrial ribosomes consist of a small (37S) and a large (54S) subunit. The 37S small subunit contains a 16S ribosomal RNA (16S mt-rRNA) and 32 different proteins. The 54S large subunit contains a 23S rRNA (23S mt-rRNA) and 42 different proteins.

Its subcellular location is the mitochondrion. In terms of biological role, component of the mitochondrial ribosome (mitoribosome), a dedicated translation machinery responsible for the synthesis of mitochondrial genome-encoded proteins, including at least some of the essential transmembrane subunits of the mitochondrial respiratory chain. The mitoribosomes are attached to the mitochondrial inner membrane and translation products are cotranslationally integrated into the membrane. The chain is Large ribosomal subunit protein uL13m (mrpl23) from Neurospora crassa (strain ATCC 24698 / 74-OR23-1A / CBS 708.71 / DSM 1257 / FGSC 987).